The sequence spans 337 residues: Anthranilate phosphoribosyltransferase (337 aa).

5-phospho-alpha-D-ribose 1-diphosphate-binding positions include glycine 81, 84–85 (GD), threonine 89, 91–94 (NIST), 109–117 (KHGNRALSS), and threonine 121. Glycine 81 contacts anthranilate. Serine 93 is a binding site for Mg(2+). Position 112 (asparagine 112) interacts with anthranilate. Arginine 167 serves as a coordination point for anthranilate. Mg(2+) is bound by residues aspartate 225 and glutamate 226.

It belongs to the anthranilate phosphoribosyltransferase family. In terms of assembly, homodimer. Mg(2+) serves as cofactor.

The catalysed reaction is N-(5-phospho-beta-D-ribosyl)anthranilate + diphosphate = 5-phospho-alpha-D-ribose 1-diphosphate + anthranilate. It functions in the pathway amino-acid biosynthesis; L-tryptophan biosynthesis; L-tryptophan from chorismate: step 2/5. Its function is as follows. Catalyzes the transfer of the phosphoribosyl group of 5-phosphorylribose-1-pyrophosphate (PRPP) to anthranilate to yield N-(5'-phosphoribosyl)-anthranilate (PRA). The polypeptide is Anthranilate phosphoribosyltransferase (Sinorhizobium medicae (strain WSM419) (Ensifer medicae)).